A 141-amino-acid polypeptide reads, in one-letter code: Large ribosomal subunit protein uL11 (141 aa).

It belongs to the universal ribosomal protein uL11 family. As to quaternary structure, part of the ribosomal stalk of the 50S ribosomal subunit. Interacts with L10 and the large rRNA to form the base of the stalk. L10 forms an elongated spine to which L12 dimers bind in a sequential fashion forming a multimeric L10(L12)X complex. In terms of processing, one or more lysine residues are methylated.

In terms of biological role, forms part of the ribosomal stalk which helps the ribosome interact with GTP-bound translation factors. In Chlamydia trachomatis serovar A (strain ATCC VR-571B / DSM 19440 / HAR-13), this protein is Large ribosomal subunit protein uL11.